The following is a 443-amino-acid chain: ATP-dependent protease ATPase subunit HslU (443 aa).

Residues Ile18, 60 to 65 (GVGKTE), Asp256, Glu321, and Arg393 contribute to the ATP site.

This sequence belongs to the ClpX chaperone family. HslU subfamily. A double ring-shaped homohexamer of HslV is capped on each side by a ring-shaped HslU homohexamer. The assembly of the HslU/HslV complex is dependent on binding of ATP.

It is found in the cytoplasm. Functionally, ATPase subunit of a proteasome-like degradation complex; this subunit has chaperone activity. The binding of ATP and its subsequent hydrolysis by HslU are essential for unfolding of protein substrates subsequently hydrolyzed by HslV. HslU recognizes the N-terminal part of its protein substrates and unfolds these before they are guided to HslV for hydrolysis. The protein is ATP-dependent protease ATPase subunit HslU of Escherichia coli O17:K52:H18 (strain UMN026 / ExPEC).